The primary structure comprises 362 residues: tRNA/tmRNA (uracil-C(5))-methyltransferase (362 aa).

Residues Q182, Y210, N215, E231, and D293 each contribute to the S-adenosyl-L-methionine site. C318 (nucleophile) is an active-site residue. E352 functions as the Proton acceptor in the catalytic mechanism.

This sequence belongs to the class I-like SAM-binding methyltransferase superfamily. RNA M5U methyltransferase family. TrmA subfamily.

The catalysed reaction is uridine(54) in tRNA + S-adenosyl-L-methionine = 5-methyluridine(54) in tRNA + S-adenosyl-L-homocysteine + H(+). It carries out the reaction uridine(341) in tmRNA + S-adenosyl-L-methionine = 5-methyluridine(341) in tmRNA + S-adenosyl-L-homocysteine + H(+). Dual-specificity methyltransferase that catalyzes the formation of 5-methyluridine at position 54 (m5U54) in all tRNAs, and that of position 341 (m5U341) in tmRNA (transfer-mRNA). In Neisseria meningitidis serogroup B (strain ATCC BAA-335 / MC58), this protein is tRNA/tmRNA (uracil-C(5))-methyltransferase.